Reading from the N-terminus, the 273-residue chain is Light-independent protochlorophyllide reductase iron-sulfur ATP-binding protein (273 aa).

ATP contacts are provided by residues 12–17 (GIGKST) and Lys41. Residue Ser16 coordinates Mg(2+). [4Fe-4S] cluster-binding residues include Cys97 and Cys131. An ATP-binding site is contributed by 182–183 (NR).

It belongs to the NifH/BchL/ChlL family. In terms of assembly, homodimer. Protochlorophyllide reductase is composed of three subunits; BchL, BchN and BchB. The cofactor is [4Fe-4S] cluster.

It catalyses the reaction chlorophyllide a + oxidized 2[4Fe-4S]-[ferredoxin] + 2 ADP + 2 phosphate = protochlorophyllide a + reduced 2[4Fe-4S]-[ferredoxin] + 2 ATP + 2 H2O. Its pathway is porphyrin-containing compound metabolism; bacteriochlorophyll biosynthesis (light-independent). Functionally, component of the dark-operative protochlorophyllide reductase (DPOR) that uses Mg-ATP and reduced ferredoxin to reduce ring D of protochlorophyllide (Pchlide) to form chlorophyllide a (Chlide). This reaction is light-independent. The L component serves as a unique electron donor to the NB-component of the complex, and binds Mg-ATP. This chain is Light-independent protochlorophyllide reductase iron-sulfur ATP-binding protein, found in Chloroflexus aurantiacus (strain ATCC 29364 / DSM 637 / Y-400-fl).